A 314-amino-acid chain; its full sequence is DegV domain-containing protein XAC3508 (314 aa).

In terms of domain architecture, DegV spans 3 to 307 (IGIVVDSACD…KGALAVGFAA (305 aa)). Positions 63 and 96 each coordinate hexadecanoate.

In terms of biological role, may bind long-chain fatty acids, such as palmitate, and may play a role in lipid transport or fatty acid metabolism. This Xanthomonas axonopodis pv. citri (strain 306) protein is DegV domain-containing protein XAC3508.